Consider the following 592-residue polypeptide: Beta-xylosidase (592 aa).

The signal sequence occupies residues 1–19 (MYLNACRALTLISVLSLLA). A lipid anchor (N-palmitoyl cysteine) is attached at cysteine 20. Cysteine 20 carries the S-diacylglycerol cysteine lipid modification.

It belongs to the glycosyl hydrolase 43 family.

Its subcellular location is the cell outer membrane. Its function is as follows. Xylosidase involved in ulvan degradation. Ulvan is the main polysaccharide component of the Ulvales (green seaweed) cell wall. It is composed of disaccharide building blocks comprising 3-sulfated rhamnose (Rha3S) linked to D-glucuronic acid (GlcA), L-iduronic acid (IduA), or D-xylose (Xyl). Beta-xylosidase converts Xyl-Rha3S, a product of alpha-L-rhamnosidase acting on Rha-Xyl-Rha3S oligosaccharides, further to Xyl and Rha3S. The chain is Beta-xylosidase from Formosa agariphila (strain DSM 15362 / KCTC 12365 / LMG 23005 / KMM 3901 / M-2Alg 35-1).